The sequence spans 56 residues: Ovomucoid (56 aa).

In terms of domain architecture, Kazal-like spans 6–56 (VDCSEYPKPACTLEYRPLCGSDSKTYANKCNFCNAVVESNGTLTLSHFGKC). Disulfide bonds link Cys-8/Cys-38, Cys-16/Cys-35, and Cys-24/Cys-56. N-linked (GlcNAc...) asparagine glycosylation occurs at Asn-45.

The protein resides in the secreted. The chain is Ovomucoid from Oreortyx pictus (Mountain quail).